A 156-amino-acid chain; its full sequence is Large ribosomal subunit protein uL15 (156 aa).

The interval 25 to 48 (RGIGCGKGKTSGRGHKGQKARSGV) is disordered. The segment covering 34–43 (TSGRGHKGQK) has biased composition (basic residues).

Belongs to the universal ribosomal protein uL15 family. In terms of assembly, part of the 50S ribosomal subunit.

Functionally, binds to the 23S rRNA. The polypeptide is Large ribosomal subunit protein uL15 (Wolbachia pipientis subsp. Culex pipiens (strain wPip)).